A 267-amino-acid polypeptide reads, in one-letter code: Regulatory protein RecX (267 aa).

The protein belongs to the RecX family.

The protein localises to the cytoplasm. In terms of biological role, modulates RecA activity. In Staphylococcus epidermidis (strain ATCC 12228 / FDA PCI 1200), this protein is Regulatory protein RecX.